The sequence spans 21 residues: Nucleoside diphosphate kinase (21 aa).

The active-site Pros-phosphohistidine intermediate is the H4.

The protein belongs to the NDK family. Homohexamer. Requires Mg(2+) as cofactor.

The protein localises to the cytoplasm. The catalysed reaction is a 2'-deoxyribonucleoside 5'-diphosphate + ATP = a 2'-deoxyribonucleoside 5'-triphosphate + ADP. It carries out the reaction a ribonucleoside 5'-diphosphate + ATP = a ribonucleoside 5'-triphosphate + ADP. Functionally, major role in the synthesis of nucleoside triphosphates other than ATP. The ATP gamma phosphate is transferred to the NDP beta phosphate via a ping-pong mechanism, using a phosphorylated active-site intermediate. The chain is Nucleoside diphosphate kinase (NDK1) from Candida albicans (Yeast).